Here is a 429-residue protein sequence, read N- to C-terminus: UDP-N-acetylglucosamine 1-carboxyvinyltransferase 2 (429 aa).

Lysine 22–asparagine 23 provides a ligand contact to phosphoenolpyruvate. Arginine 92 provides a ligand contact to UDP-N-acetyl-alpha-D-glucosamine. The active-site Proton donor is the cysteine 116. Cysteine 116 carries the post-translational modification 2-(S-cysteinyl)pyruvic acid O-phosphothioketal. Residues arginine 121–glutamine 125, aspartate 305, and isoleucine 327 contribute to the UDP-N-acetyl-alpha-D-glucosamine site.

This sequence belongs to the EPSP synthase family. MurA subfamily.

The protein localises to the cytoplasm. It catalyses the reaction phosphoenolpyruvate + UDP-N-acetyl-alpha-D-glucosamine = UDP-N-acetyl-3-O-(1-carboxyvinyl)-alpha-D-glucosamine + phosphate. Its pathway is cell wall biogenesis; peptidoglycan biosynthesis. Functionally, cell wall formation. Adds enolpyruvyl to UDP-N-acetylglucosamine. The chain is UDP-N-acetylglucosamine 1-carboxyvinyltransferase 2 from Bacillus subtilis (strain 168).